The following is a 269-amino-acid chain: Phosphonoacetaldehyde hydrolase (269 aa).

Residue D10 is the Nucleophile of the active site. Residues D10 and A12 each contribute to the Mg(2+) site. K52 functions as the Schiff-base intermediate with substrate in the catalytic mechanism. D186 contacts Mg(2+).

It belongs to the HAD-like hydrolase superfamily. PhnX family. In terms of assembly, homodimer. Mg(2+) is required as a cofactor.

It catalyses the reaction phosphonoacetaldehyde + H2O = acetaldehyde + phosphate + H(+). Involved in phosphonate degradation. The protein is Phosphonoacetaldehyde hydrolase of Salmonella typhi.